Reading from the N-terminus, the 212-residue chain is ER lumen protein-retaining receptor 2 (212 aa).

At 1 to 4 (MNIF) the chain is on the lumenal side. The chain crosses the membrane as a helical span at residues 5–24 (RLTGDLSHLAAIVILLLKIW). At 25–32 (KTRSCAGI) the chain is on the cytoplasmic side. A helical membrane pass occupies residues 33–52 (SGKSQLLFALVFTTRYLDLF). The segment at 47 to 48 (RY) is interaction with the K-D-E-L motif on target proteins. The Lumenal segment spans residues 53–58 (TSFISL). A helical membrane pass occupies residues 59 to 79 (YNTSMKLIYIACSYATVYLIY). Topologically, residues 80–92 (MKFKATYDGNHDT) are cytoplasmic. The chain crosses the membrane as a helical span at residues 93–110 (FRVEFLVVPVGGLSFLVN). Topologically, residues 111 to 116 (HDFSPL) are lumenal. The helical transmembrane segment at 117-135 (EILWTFSIYLESVAILPQL) threads the bilayer. The Cytoplasmic segment spans residues 136 to 149 (FMISKTGEAETITT). A helical transmembrane segment spans residues 150–168 (HYLFFLGLYRALYLVNWIW). The segment at 159 to 169 (RALYLVNWIWR) is interaction with the K-D-E-L motif on target proteins. The Lumenal segment spans residues 169-178 (RFYFEGFFDL). The helical transmembrane segment at 179–199 (IAVVAGVVQTILYCDFFYLYI) threads the bilayer. The Cytoplasmic segment spans residues 200–212 (TKVLKGKKLSLPA). The important for recycling of cargo proteins with the sequence motif K-D-E-L from the Golgi to the endoplasmic reticulum stretch occupies residues 204–207 (KGKK).

It belongs to the ERD2 family.

Its subcellular location is the endoplasmic reticulum membrane. The protein resides in the golgi apparatus membrane. It localises to the cytoplasmic vesicle. It is found in the COPI-coated vesicle membrane. Membrane receptor that binds the K-D-E-L sequence motif in the C-terminal part of endoplasmic reticulum resident proteins and maintains their localization in that compartment by participating to their vesicle-mediated recycling back from the Golgi. Binding is pH dependent, and is optimal at pH 5-5.4. This is ER lumen protein-retaining receptor 2 (Kdelr2) from Mus musculus (Mouse).